A 453-amino-acid polypeptide reads, in one-letter code: tRNA modification GTPase MnmE (453 aa).

Positions 22, 79, and 119 each coordinate (6S)-5-formyl-5,6,7,8-tetrahydrofolate. Residues 215 to 376 form the TrmE-type G domain; it reads GMKVVIAGRP…LQQHLKSLMG (162 aa). Position 225 (asparagine 225) interacts with K(+). Residues 225–230, 244–250, 269–272, and 334–337 contribute to the GTP site; these read NAGKSS, TEIAGTT, DTAG, and NKAD. Position 229 (serine 229) interacts with Mg(2+). The K(+) site is built by threonine 244, isoleucine 246, and threonine 249. Threonine 250 contacts Mg(2+). A (6S)-5-formyl-5,6,7,8-tetrahydrofolate-binding site is contributed by lysine 453.

It belongs to the TRAFAC class TrmE-Era-EngA-EngB-Septin-like GTPase superfamily. TrmE GTPase family. Homodimer. Heterotetramer of two MnmE and two MnmG subunits. The cofactor is K(+).

It localises to the cytoplasm. In terms of biological role, exhibits a very high intrinsic GTPase hydrolysis rate. Involved in the addition of a carboxymethylaminomethyl (cmnm) group at the wobble position (U34) of certain tRNAs, forming tRNA-cmnm(5)s(2)U34. This chain is tRNA modification GTPase MnmE, found in Shewanella woodyi (strain ATCC 51908 / MS32).